Reading from the N-terminus, the 58-residue chain is Ribosome modulation factor (58 aa).

Basic residues predominate over residues 1–14 (MKRQKRDKLTRAHS). Positions 1–25 (MKRQKRDKLTRAHSKGYQAGISGRS) are disordered.

The protein belongs to the ribosome modulation factor family.

It localises to the cytoplasm. In terms of biological role, during stationary phase, converts 70S ribosomes to an inactive dimeric form (100S ribosomes). The protein is Ribosome modulation factor of Alteromonas naphthalenivorans.